The following is a 142-amino-acid chain: Transcriptional regulator MraZ (142 aa).

2 consecutive SpoVT-AbrB domains span residues 5-47 (EFQH…PQHE) and 76-119 (ATEC…SKEE).

This sequence belongs to the MraZ family. As to quaternary structure, forms oligomers.

The protein resides in the cytoplasm. It is found in the nucleoid. This chain is Transcriptional regulator MraZ, found in Desulforamulus reducens (strain ATCC BAA-1160 / DSM 100696 / MI-1) (Desulfotomaculum reducens).